The primary structure comprises 53 residues: Large ribosomal subunit protein bL33B (53 aa).

Belongs to the bacterial ribosomal protein bL33 family.

The polypeptide is Large ribosomal subunit protein bL33B (Sorangium cellulosum (strain So ce56) (Polyangium cellulosum (strain So ce56))).